A 711-amino-acid polypeptide reads, in one-letter code: Protein ACTIVITY OF BC1 COMPLEX KINASE 3, chloroplastic (711 aa).

The transit peptide at 1–42 (MSLVVGQSLGLTLVGDGLSLRNSKINVGKSKFFSVNRRRLAR) directs the protein to the chloroplast. Residues 216 to 546 (SVSPEPIAAA…IELLFKDGKF (331 aa)) enclose the Protein kinase domain. Residues 222-230 (IAAASLGQV) and K245 contribute to the ATP site. D379 functions as the Proton acceptor in the catalytic mechanism.

The protein belongs to the protein kinase superfamily. ADCK protein kinase family. As to quaternary structure, interacts with ABC1K1 in plastoglobules (PG). Interacts with PGM48.

The protein resides in the plastid. The protein localises to the chloroplast. It is found in the plastoglobule. It catalyses the reaction L-seryl-[protein] + ATP = O-phospho-L-seryl-[protein] + ADP + H(+). It carries out the reaction L-threonyl-[protein] + ATP = O-phospho-L-threonyl-[protein] + ADP + H(+). In terms of biological role, kinase that can phosphorylate the tocopherol cyclase VTE1, a key enzyme of tocopherol (vitamin E) metabolism and involved in the recycling of oxidated alpha-tocopherol quinone, possibly stabilizing it at plastoglobules. Also regulates membrane prenylquinone composition. Required for photooxidative stress responses to prevent photosystem II core and chlorophyll degradations. Together with ABC1K1, contributes to plastoglobule (PG) function in prenyl-lipid metabolism, stress response, and thylakoid remodeling. Promotes photodamage of chloroplasts under continuous red light, thus working in opposition to ABC1K1. The polypeptide is Protein ACTIVITY OF BC1 COMPLEX KINASE 3, chloroplastic (Arabidopsis thaliana (Mouse-ear cress)).